Consider the following 348-residue polypeptide: MNGTEGLNFYVPFSNKTGVVRSPFEYPQYYLAEPWQFSVLAAYMFLLIVLGFPINFLTLYVTVQHKKLRTPLNYIPLNLAVANLFMVFGGFTTTLYTSLHAYFVFGPTGCNLEGFFATLGGEIALWSLVVLAIERYVVVCKPMSNFRFGENHAIMGLALTWVMAMACAAPPLVGWSRYIPEGMQCSCGIDYYTSRQEVNNESFVIYMFVVHFTIPLVIIFFCYGQLVFTVKEAAAQQQESATTQKAEKEVTRMVIIMVVAFLICWVPYASVAFYIFTHQGSDFGPIFMTIPSFFAKSSSIYNPVIYIMMNKQLRNCMLTTLCCGRNPLGDDEASTTASKTETSQVAPA.

Methionine 1 is subject to N-acetylmethionine. Residues 1–36 (MNGTEGLNFYVPFSNKTGVVRSPFEYPQYYLAEPWQ) lie on the Extracellular side of the membrane. Asparagine 2 and asparagine 15 each carry an N-linked (GlcNAc...) asparagine glycan. A helical transmembrane segment spans residues 37–61 (FSVLAAYMFLLIVLGFPINFLTLYV). Over 62–73 (TVQHKKLRTPLN) the chain is Cytoplasmic. The chain crosses the membrane as a helical span at residues 74 to 96 (YIPLNLAVANLFMVFGGFTTTLY). The Extracellular portion of the chain corresponds to 97–110 (TSLHAYFVFGPTGC). A disulfide bridge links cysteine 110 with cysteine 187. Residues 111-133 (NLEGFFATLGGEIALWSLVVLAI) traverse the membrane as a helical segment. The 'Ionic lock' involved in activated form stabilization motif lies at 134 to 136 (ERY). Residues 134 to 152 (ERYVVVCKPMSNFRFGENH) lie on the Cytoplasmic side of the membrane. The chain crosses the membrane as a helical span at residues 153–173 (AIMGLALTWVMAMACAAPPLV). Over 174–202 (GWSRYIPEGMQCSCGIDYYTSRQEVNNES) the chain is Extracellular. A Zn(2+)-binding site is contributed by glutamate 201. A helical membrane pass occupies residues 203 to 224 (FVIYMFVVHFTIPLVIIFFCYG). Residues 225–252 (QLVFTVKEAAAQQQESATTQKAEKEVTR) lie on the Cytoplasmic side of the membrane. Residues 253 to 274 (MVIIMVVAFLICWVPYASVAFY) traverse the membrane as a helical segment. The Extracellular portion of the chain corresponds to 275 to 286 (IFTHQGSDFGPI). Glutamine 279 is a Zn(2+) binding site. The helical transmembrane segment at 287-308 (FMTIPSFFAKSSSIYNPVIYIM) threads the bilayer. Lysine 296 carries the N6-(retinylidene)lysine modification. Over 309-348 (MNKQLRNCMLTTLCCGRNPLGDDEASTTASKTETSQVAPA) the chain is Cytoplasmic. S-palmitoyl cysteine attachment occurs at residues cysteine 322 and cysteine 323. The segment at 330–348 (DDEASTTASKTETSQVAPA) is interaction with SAG. Phosphoserine is present on serine 334. Threonine 335 and threonine 336 each carry phosphothreonine. Serine 338 carries the phosphoserine modification. Threonine 340 and threonine 342 each carry phosphothreonine. Serine 343 carries the phosphoserine modification.

This sequence belongs to the G-protein coupled receptor 1 family. Opsin subfamily. As to quaternary structure, homodimer. May form a complex composed of RHO, GRK1 and RCVRN in a Ca(2+)-dependent manner; RCVRN prevents the interaction between GRK1 and RHO. Interacts with GRK1. Interacts (phosphorylated form) with SAG. Interacts with GNAT1. Interacts with GNAT3. SAG and G-proteins compete for a common binding site. Interacts with PRCD; the interaction promotes PRCD stability. Forms a complex with ASAP1 and ARF4. Forms a complex with ASAP1, RAB11A, Rabin8/RAB3IP, ARF4 and RAB11FIP3; the complex regulates Golgi-to-cilia rhodopsin/RHO transport in photoreceptors. Post-translationally, phosphorylated on some or all of the serine and threonine residues present in the C-terminal region. In terms of processing, contains one covalently linked retinal chromophore. Upon light absorption, the covalently bound 11-cis-retinal is converted to all-trans-retinal. After hydrolysis of the Schiff base and release of the covalently bound all-trans-retinal, active rhodopsin is regenerated by binding of a fresh molecule of 11-cis-retinal.

The protein resides in the membrane. It localises to the cell projection. The protein localises to the cilium. It is found in the photoreceptor outer segment. Functionally, photoreceptor required for image-forming vision at low light intensity. Required for photoreceptor cell viability after birth. Light-induced isomerization of 11-cis to all-trans retinal triggers a conformational change that activates signaling via G-proteins. Subsequent receptor phosphorylation mediates displacement of the bound G-protein alpha subunit by the arrestin SAG and terminates signaling. The polypeptide is Rhodopsin (RHO) (Globicephala melas (Long-finned pilot whale)).